The following is a 218-amino-acid chain: Ribose-5-phosphate isomerase A (218 aa).

Residues 28–31, 81–84, and 94–97 each bind substrate; these read TGST, DGAD, and KGGG. Glu-103 functions as the Proton acceptor in the catalytic mechanism. Residue Lys-121 coordinates substrate.

Belongs to the ribose 5-phosphate isomerase family. As to quaternary structure, homodimer.

It carries out the reaction aldehydo-D-ribose 5-phosphate = D-ribulose 5-phosphate. The protein operates within carbohydrate degradation; pentose phosphate pathway; D-ribose 5-phosphate from D-ribulose 5-phosphate (non-oxidative stage): step 1/1. Its function is as follows. Catalyzes the reversible conversion of ribose-5-phosphate to ribulose 5-phosphate. This chain is Ribose-5-phosphate isomerase A, found in Shewanella sediminis (strain HAW-EB3).